The chain runs to 612 residues: Kelch repeat and BTB domain-containing protein 3 (612 aa).

A BTB domain is found at 52–119 (YDFKIIMKDE…AYTGKTKITD (68 aa)). The BACK domain occupies 150-250 (NLVNCLQLLS…VRLHQLSEET (101 aa)). Kelch repeat units lie at residues 291-337 (STTE…GSSL), 339-390 (SYGE…STMK), 400-450 (MALD…PEAS), 452-502 (CQNV…ATLI), and 548-595 (GIED…FYCQ).

The protein is Kelch repeat and BTB domain-containing protein 3 of Pongo abelii (Sumatran orangutan).